The chain runs to 427 residues: 11-beta-hydroxysteroid dehydrogenase type 2 (427 aa).

82 to 111 (TRAVLITGCDSGFGNATAKKLDAMGFTVLA) lines the NAD(+) pocket. Serine 219 is a substrate binding site. Tyrosine 232 serves as the catalytic Proton acceptor.

The protein belongs to the short-chain dehydrogenases/reductases (SDR) family. As to quaternary structure, interacts with ligand-free cytoplasmic NR3C2. Highly expressed in the kidney and adrenal and at lower levels in the colon.

It is found in the microsome. The protein localises to the endoplasmic reticulum. The catalysed reaction is an 11beta-hydroxysteroid + NAD(+) = an 11-oxosteroid + NADH + H(+). It catalyses the reaction corticosterone + NAD(+) = 11-dehydrocorticosterone + NADH + H(+). It carries out the reaction cortisol + NAD(+) = cortisone + NADH + H(+). The enzyme catalyses 11beta,17beta-dihydroxyandrost-4-ene-3-one + NAD(+) = 17beta-hydroxyandrost-4-ene-3,11-dione + NADH + H(+). The catalysed reaction is 11beta-hydroxyandrost-4-ene-3,17-dione + NAD(+) = androst-4-ene-3,11,17-trione + NADH + H(+). Its pathway is steroid metabolism. Inhibited by glycyrrhetinic acid, carbenoloxone, 11-alpha-OH-progesterone and 11-beta-OH-progesterone. Its function is as follows. Catalyzes the conversion of biologically active 11beta-hydroxyglucocorticoids (11beta-hydroxysteroid) such as cortisol, to inactive 11-ketoglucocorticoids (11-oxosteroid) such as cortisone, in the presence of NAD(+). Functions as a dehydrogenase (oxidase), thereby decreasing the concentration of active glucocorticoids, thus protecting the nonselective mineralocorticoid receptor from occupation by glucocorticoids. Plays an important role in maintaining glucocorticoids balance during preimplantation and protects the fetus from excessive maternal corticosterone exposure. Catalyzes the oxidation of 11beta-hydroxytestosterone (11beta,17beta-dihydroxyandrost-4-ene-3-one) to 11-ketotestosterone (17beta-hydroxyandrost-4-ene-3,11-dione), a major bioactive androgen. Catalyzes the conversion of 11beta-hydroxyandrostenedione (11beta-hydroxyandrost-4-ene-3,17-dione) to 11-ketoandrostenedione (androst-4-ene-3,11,17-trione), which can be further metabolized to 11-ketotestosterone. Converts 7-beta-25-dihydroxycholesterol to 7-oxo-25-hydroxycholesterol in vitro. 7-beta-25-dihydroxycholesterol (not 7-oxo-25-hydroxycholesterol) acts as a ligand for the G-protein-coupled receptor (GPCR) Epstein-Barr virus-induced gene 2 (EBI2) and may thereby regulate immune cell migration. May protect ovulating oocytes and fertilizing spermatozoa from the adverse effects of cortisol. The sequence is that of 11-beta-hydroxysteroid dehydrogenase type 2 (HSD11B2) from Ovis aries (Sheep).